A 1004-amino-acid chain; its full sequence is MAGTDSPAAARFVYRCLLFAPAIVVGLLLPLTLPPIAAAQRHTASDNPSTYNIGGVLSNSESETYFHTIISHLNFDQQYVPRKVTYYDKTIRMDKNPIKTVFNVCDKLIENRVYAVVVSHEQTSGDLSPAAVSYTSGFYSIPVIGISSRDAAFSDKNIHVSFLRTVPPYYHQADVWLEMLSHFAYTKVIIIHSSDTDGRAILGRFQTTSQTYYDDVDVRATVELIVEFEPKLESFTEHLIDMKTAQSRVYLMYASTEDAQVIFRDAGEYNMTGEGHVWIVTEQALFANNTPDGVLGLQLEHAHSDKGHIRDSVYVLASAIKEMISNETIAEAPKDCGDSAVNWESGKRLFQYLKSRNITGETGQVAFDDNGDRIYAGYDVINIREHQKKHVVGKFSYDSMRAKMRMNINDSEIIWPGKQNRKPEGIMIPTHLKVLTIEEKPFVYVRRMGDDEFRCEPDERPCPLFNATDSTANEYCCRGYCIDLLIELSKRINFTYDLALSPDGQFGHYLLRNNSGAMTLRKEWTGLMGELVNERADMIVAPLTINPERAEYIEFSKPFKYQGITILEKKPSRSSTLVSFLQPFSNTLWILVMVSVHVVALVLYLLDRFSPFGRFKLSHSDSNEEKALNLSSAVWFAWGVLLNSGIGEGTPRSFSARVLGMVWAGFAMIIVASYTANLAAFLVLERPKTKLSGINDARLRNTMENLTCATVKGSSVDMYFRRQVELSNMYRTMEANNYATAEQAIQDVKKGKLMAFIWDSSRLEYEASKDCELVTAGELFGRSGYGVGLQKGSPWTDSVTLAILEFHESGFMEKLDKQWIFHGHVQQNCELFEKTPNTLGLKNMAGVFILVGVGIAGGVGLIIIEVIYKKHQVKKQKRLDIARHAADKWRGTIEKRKTIRASLAMQRQYNVGLNSTHPPGTISLAVDKRRYPRLGQRLGPERAWPGDAADVLRTRRPYELGKPGQSPKVMGATPAMLGRTRPQQNILPPRYSPGYTSDVSHLVV.

The first 39 residues, 1 to 39 (MAGTDSPAAARFVYRCLLFAPAIVVGLLLPLTLPPIAAA), serve as a signal peptide directing secretion. At 40-585 (QRHTASDNPS…TLVSFLQPFS (546 aa)) the chain is on the extracellular side. 7 N-linked (GlcNAc...) asparagine glycosylation sites follow: asparagine 270, asparagine 326, asparagine 357, asparagine 409, asparagine 466, asparagine 493, and asparagine 513. Residues 542–544 (PLT) and arginine 549 contribute to the glycine site. A helical transmembrane segment spans residues 586 to 606 (NTLWILVMVSVHVVALVLYLL). The Cytoplasmic segment spans residues 607–663 (DRFSPFGRFKLSHSDSNEEKALNLSSAVWFAWGVLLNSGIGEGTPRSFSARVLGMVW). The chain crosses the membrane as a helical span at residues 664–684 (AGFAMIIVASYTANLAAFLVL). At 685-843 (ERPKTKLSGI…KTPNTLGLKN (159 aa)) the chain is on the extracellular side. Residue asparagine 705 is glycosylated (N-linked (GlcNAc...) asparagine). Glycine is bound by residues serine 715 and aspartate 759. A helical transmembrane segment spans residues 844–864 (MAGVFILVGVGIAGGVGLIII). Residues 865–1004 (EVIYKKHQVK…YTSDVSHLVV (140 aa)) lie on the Cytoplasmic side of the membrane. The disordered stretch occupies residues 980–1004 (TRPQQNILPPRYSPGYTSDVSHLVV). Positions 994 to 1004 (GYTSDVSHLVV) are enriched in polar residues.

It belongs to the glutamate-gated ion channel (TC 1.A.10.1) family. As to quaternary structure, forms a heteromeric NMDA channel with Nmdar2.

It localises to the cell membrane. The protein resides in the postsynaptic cell membrane. Its subcellular location is the postsynaptic density. Functionally, NMDA receptor subtype of glutamate-gated ion channels with high calcium permeability and voltage-dependent sensitivity to magnesium. Mediated by glycine. This protein plays a key role in synaptic plasticity, synaptogenesis, excitotoxicity, memory acquisition and learning. It mediates neuronal functions in glutamate neurotransmission. Is involved in the cell surface targeting of NMDA receptors. Plays a role in associative learning and in long-term memory consolidation. This is Glutamate [NMDA] receptor subunit 1 from Drosophila persimilis (Fruit fly).